A 98-amino-acid polypeptide reads, in one-letter code: NADH-ubiquinone oxidoreductase chain 4L (98 aa).

3 consecutive transmembrane segments (helical) span residues 1 to 21 (MTLI…GLLM), 29 to 49 (ALLC…LTIL), and 61 to 81 (IILL…LVMV).

Belongs to the complex I subunit 4L family. In terms of assembly, core subunit of respiratory chain NADH dehydrogenase (Complex I) which is composed of 45 different subunits.

The protein localises to the mitochondrion inner membrane. The enzyme catalyses a ubiquinone + NADH + 5 H(+)(in) = a ubiquinol + NAD(+) + 4 H(+)(out). Its function is as follows. Core subunit of the mitochondrial membrane respiratory chain NADH dehydrogenase (Complex I) which catalyzes electron transfer from NADH through the respiratory chain, using ubiquinone as an electron acceptor. Part of the enzyme membrane arm which is embedded in the lipid bilayer and involved in proton translocation. In Balaenoptera borealis (Sei whale), this protein is NADH-ubiquinone oxidoreductase chain 4L (MT-ND4L).